The chain runs to 237 residues: Probable 2-phosphosulfolactate phosphatase (237 aa).

The protein belongs to the ComB family. Requires Mg(2+) as cofactor.

The catalysed reaction is (2R)-O-phospho-3-sulfolactate + H2O = (2R)-3-sulfolactate + phosphate. In Thermus thermophilus (strain ATCC 27634 / DSM 579 / HB8), this protein is Probable 2-phosphosulfolactate phosphatase.